The sequence spans 88 residues: Small cysteine-rich outer membrane protein OmcA (88 aa).

The N-terminal stretch at 1–18 (MKKTALLAALCSVVSLSS) is a signal peptide. The N-palmitoyl cysteine moiety is linked to residue Cys-19. Cys-19 carries the S-diacylglycerol cysteine lipid modification.

Part of a disulfide cross-linked outer membrane complex (COMC) composed of the major outer membrane porin (MOMP), the small cysteine-rich protein (OmcA) and the large cysteine-rich periplasmic protein (OmcB).

The protein localises to the cell outer membrane. In terms of biological role, in elementary bodies (EBs, the infectious stage, which is able to survive outside the host cell) provides the structural integrity of the outer envelope through disulfide cross-links with the large cysteine-rich periplasmic protein and the major outer membrane porin. It has been described in publications as the Sarkosyl-insoluble COMC (Chlamydia outer membrane complex), and serves as the functional equivalent of peptidoglycan. This Chlamydia trachomatis serovar B (strain Jali20/OT) protein is Small cysteine-rich outer membrane protein OmcA (omcA).